Here is a 432-residue protein sequence, read N- to C-terminus: RNA binding protein fox-1 homolog 2 (432 aa).

Residues 1-21 (MAEGGQAQQQPPQLGPGAAAR) are compositionally biased toward low complexity. Positions 1–169 (MAEGGQAQQQ…STPKRLHVSN (169 aa)) are disordered. 2 stretches are compositionally biased toward polar residues: residues 60 to 69 (QGNQEPTTTP) and 101 to 121 (YAGQ…PHGE). A compositionally biased stretch (low complexity) spans 122 to 159 (QSSNSPSNQNGSLTQTEGGAQTDGQQSQTQSSENSESK). The region spanning 163 to 239 (KRLHVSNIPF…RKIEVNNATA (77 aa)) is the RRM domain. Position 323 is an omega-N-methylarginine (R323). 2 positions are modified to asymmetric dimethylarginine: R339 and R371. Asymmetric dimethylarginine; alternate is present on residues R423 and R428. Omega-N-methylarginine; alternate is present on residues R423 and R428.

As to quaternary structure, interacts with ER-alpha N-terminal activation domain. Interacts with RBPMS; the interaction allows cooperative assembly of stable cell-specific alternative splicing regulatory complexes.

The protein localises to the nucleus. The protein resides in the cytoplasm. In terms of biological role, RNA-binding protein that regulates alternative splicing events by binding to 5'-UGCAUGU-3' elements. Prevents binding of U2AF2 to the 3'-splice site. Regulates alternative splicing of tissue-specific exons and of differentially spliced exons during erythropoiesis. Seems to act as a coregulatory factor of ER-alpha. Together with RNA binding proteins RBPMS and MBNL1/2, activates vascular smooth muscle cells alternative splicing events. This Rattus norvegicus (Rat) protein is RNA binding protein fox-1 homolog 2 (Rbfox2).